A 223-amino-acid chain; its full sequence is Golgi SNAP receptor complex member 1-1 (223 aa).

Residues 1–201 are Cytoplasmic-facing; the sequence is MDVPSSWDAL…AAIKRKKSMD (201 aa). Residues 8–67 adopt a coiled-coil conformation; sequence DALRKQARKIEAQLDEQMHSYRRLVSTKALSKSDGNESDLEAGIDLLLRQLQQVNAQMQA. Residues 202–222 form a helical; Anchor for type IV membrane protein membrane-spanning segment; the sequence is TIILSLVAAVCTFLIFIYWIT. A topological domain (vesicular) is located at residue Lys-223.

It belongs to the GOSR1 family. In terms of assembly, component of several multiprotein Golgi SNARE complexes.

Its subcellular location is the golgi apparatus membrane. In terms of biological role, involved in transport from the ER to the Golgi apparatus as well as in intra-Golgi transport. It belongs to a super-family of proteins called t-SNAREs or soluble NSF (N-ethylmaleimide-sensitive factor) attachment protein receptor. The polypeptide is Golgi SNAP receptor complex member 1-1 (GOS11) (Arabidopsis thaliana (Mouse-ear cress)).